The sequence spans 169 residues: Ribosome maturation factor RimP (169 aa).

The protein belongs to the RimP family.

It localises to the cytoplasm. Functionally, required for maturation of 30S ribosomal subunits. The protein is Ribosome maturation factor RimP of Pseudomonas putida (strain ATCC 700007 / DSM 6899 / JCM 31910 / BCRC 17059 / LMG 24140 / F1).